Consider the following 1404-residue polypeptide: MNYFKYFIFVVFLFFTIVKCEQLLGEIEISNKNFAIDASVVDTKINYILDDTIKTPKLIITSIKGDATNINDIITVSEDKSTVTFGDFTELSSSNKLVGFNWISMLIASLLSIGLFATTTTTNKKSSIIILIIGFICLSLMINGIQSISLSDVSVKIEIRVPSNYQFESFKLKLNSGSSNIVGLIANSIEIDSCSMVKDHSITIGQLVVFSSLKVCSSLDIKITNLGLSPSNTIAELKTTRNIDLQFSNGFSGSISIDSPSVTLDPGCTTTISGQTTTGTCNGGSSSKLSISAGNSAIVRNLEITCPIDNSWRVTPASSGPSTNSPSIFTTQPATNFNYGKSNLVFMAQWNNVSLLDGPVENSFNITYVTWSPNSHWLVSKDPSPTLKSGVNYEFSLELLLGQPLGEYTSISNVSIYFFNPKDITNPNGNSRYFQYSNKPPLYMKTFSGANFISNSNFIKTSITFSPTKDIGSAVFALQINRTAALTGPSEISISIKDMKITIPSKSITTPSNILSKDSELLTLPRPSTLLDPQDSSSCTYKQTDLVHWHNPSTWASGFVPLPSSNIILPEGKRVLISPCSISQTEVYKKITIPPTSELVFSDSPMTINVQDIYVQGKLTMGTNTCRYNANINVIFHGNKTTTDTIAQYFGSKGIAVASGGFISVQGKQYHNTWTKLSTTAWTGDYVIYVQDSINWEVGQQVLITTSVYRDESDNQNEVMTIAAIQGKVIQFTKPLRYYHYGGQEYQAEVALLSRRIVFRGDGNGQEQTDSQSFGGHVLVNGEGQFSGIQLIRMGQTNIKARYPLHYHLAGTVKNSYISDCSVTNSYYRCYTIHGTNNVSLVRNVAFDIRGHCYYLEDGVEVDNNIWFNFASYVHPIGKPAGGPSQTGEIFQQSDSLTQPADSAAGCYYITNAYNSLVGNAASGGWSGFAFPNLDKPIGNHRTISIIPSQFPLKEFTGNTAHSSGYYFEEGGSIYVGGNLTFNEATQLLTYNSGRFSRSTYFNGTKKDGNERWMRFNNTKIYLSNRGIQHWGERVEVVGLESHDSIRPSTLFGQAWLSNAIVNGQSGNIVSNQGRNRQGFQFYDTYVQTILSNINFRNFIKDPDSENPESDNRVIISMTHSDVFKPQGISATKQITLTNVASSQVIGHRVVETGSSRYFNFIDWDTSLVPGRTAVGAPTLVGSHQNWWQYDATCSYNNDWLCWVCDKGDKEIASISVLVPGLIESGYTNQEEDSYVGTASLFGNGITNRRSTNITRNAGITGVSNMGWYLWFSTGTPTSINIWVAQVIKNNYLFVAIPYPANTEFSIRCAYRWNNKFNYNFVLANSASEVRNGNGTRYYFDQTHLFIKAVNLALTGNEYFERGGAKVYNVFWEFNIYIEASNKNVQPVNGFYTGIPDTLPSGNL.

An N-terminal signal peptide occupies residues 1 to 20 (MNYFKYFIFVVFLFFTIVKC). The next 2 helical transmembrane spans lie at 97–117 (LVGF…GLFA) and 128–148 (IIIL…IQSI). N-linked (GlcNAc...) asparagine glycans are attached at residues asparagine 352, asparagine 365, asparagine 413, asparagine 481, asparagine 639, asparagine 838, asparagine 979, asparagine 1003, asparagine 1017, asparagine 1253, and asparagine 1334. One can recognise a G8 domain in the interval 553 to 679 (STWASGFVPL…YHNTWTKLST (127 aa)).

It belongs to the comF family.

The protein localises to the membrane. This is G8 domain-containing protein DDB_G0286897 from Dictyostelium discoideum (Social amoeba).